A 285-amino-acid polypeptide reads, in one-letter code: Probable endonuclease 4 (285 aa).

The Zn(2+) site is built by histidine 69, histidine 109, glutamate 145, aspartate 179, histidine 182, histidine 216, aspartate 229, histidine 231, and glutamate 261.

This sequence belongs to the AP endonuclease 2 family. The cofactor is Zn(2+).

It carries out the reaction Endonucleolytic cleavage to 5'-phosphooligonucleotide end-products.. Its function is as follows. Endonuclease IV plays a role in DNA repair. It cleaves phosphodiester bonds at apurinic or apyrimidinic (AP) sites, generating a 3'-hydroxyl group and a 5'-terminal sugar phosphate. The protein is Probable endonuclease 4 of Salmonella typhi.